The primary structure comprises 349 residues: tRNA pseudouridine synthase D (349 aa).

Phe27 is a binding site for substrate. Asp80 (nucleophile) is an active-site residue. Asn129 contacts substrate. In terms of domain architecture, TRUD spans Gly155–Leu303. Position 329 (Phe329) interacts with substrate.

It belongs to the pseudouridine synthase TruD family.

It carries out the reaction uridine(13) in tRNA = pseudouridine(13) in tRNA. Functionally, responsible for synthesis of pseudouridine from uracil-13 in transfer RNAs. The sequence is that of tRNA pseudouridine synthase D from Escherichia coli O6:K15:H31 (strain 536 / UPEC).